Reading from the N-terminus, the 314-residue chain is 4-hydroxy-3-methylbut-2-enyl diphosphate reductase (314 aa).

Residue C12 participates in [4Fe-4S] cluster binding. The (2E)-4-hydroxy-3-methylbut-2-enyl diphosphate site is built by H41 and H74. Residues H41 and H74 each contribute to the dimethylallyl diphosphate site. H41 and H74 together coordinate isopentenyl diphosphate. A [4Fe-4S] cluster-binding site is contributed by C96. H124 lines the (2E)-4-hydroxy-3-methylbut-2-enyl diphosphate pocket. Position 124 (H124) interacts with dimethylallyl diphosphate. An isopentenyl diphosphate-binding site is contributed by H124. Residue E126 is the Proton donor of the active site. Position 168 (T168) interacts with (2E)-4-hydroxy-3-methylbut-2-enyl diphosphate. C198 contacts [4Fe-4S] cluster. (2E)-4-hydroxy-3-methylbut-2-enyl diphosphate-binding residues include S226, S227, N228, and S270. S226, S227, N228, and S270 together coordinate dimethylallyl diphosphate. Residues S226, S227, N228, and S270 each contribute to the isopentenyl diphosphate site.

This sequence belongs to the IspH family. The cofactor is [4Fe-4S] cluster.

The catalysed reaction is isopentenyl diphosphate + 2 oxidized [2Fe-2S]-[ferredoxin] + H2O = (2E)-4-hydroxy-3-methylbut-2-enyl diphosphate + 2 reduced [2Fe-2S]-[ferredoxin] + 2 H(+). The enzyme catalyses dimethylallyl diphosphate + 2 oxidized [2Fe-2S]-[ferredoxin] + H2O = (2E)-4-hydroxy-3-methylbut-2-enyl diphosphate + 2 reduced [2Fe-2S]-[ferredoxin] + 2 H(+). It participates in isoprenoid biosynthesis; dimethylallyl diphosphate biosynthesis; dimethylallyl diphosphate from (2E)-4-hydroxy-3-methylbutenyl diphosphate: step 1/1. Its pathway is isoprenoid biosynthesis; isopentenyl diphosphate biosynthesis via DXP pathway; isopentenyl diphosphate from 1-deoxy-D-xylulose 5-phosphate: step 6/6. In terms of biological role, catalyzes the conversion of 1-hydroxy-2-methyl-2-(E)-butenyl 4-diphosphate (HMBPP) into a mixture of isopentenyl diphosphate (IPP) and dimethylallyl diphosphate (DMAPP). Acts in the terminal step of the DOXP/MEP pathway for isoprenoid precursor biosynthesis. This Pseudomonas aeruginosa (strain LESB58) protein is 4-hydroxy-3-methylbut-2-enyl diphosphate reductase.